We begin with the raw amino-acid sequence, 697 residues long: Serine/threonine-protein kinase tousled-like 2 (697 aa).

2 disordered regions span residues Lys27–Val136 and Leu289–Asn315. Residues Asn31–Ser44 show a composition bias toward polar residues. Positions Ser46 to Arg62 are enriched in basic and acidic residues. Positions Ser111–Pro131 are enriched in low complexity. 2 coiled-coil regions span residues Ala264–Lys293 and Phe334–Glu372. Residues Tyr387–Leu666 form the Protein kinase domain. Residues Leu393–Val401 and Lys416 contribute to the ATP site. Asp517 functions as the Proton acceptor in the catalytic mechanism.

Belongs to the protein kinase superfamily. Ser/Thr protein kinase family. Monomer. May form homodimers; homodimerization may enhance autophosphoylation and enzymatic activity. Heterodimer with TLK1. The cofactor is Mg(2+). Post-translationally, phosphorylated. Autophosphorylated; phosphorylation promotes the assembly of higher order oligomers and enzymatic activity.

The protein resides in the nucleus. It localises to the nucleoplasm. It is found in the cytoplasm. Its subcellular location is the perinuclear region. The protein localises to the cytoskeleton. The catalysed reaction is L-seryl-[protein] + ATP = O-phospho-L-seryl-[protein] + ADP + H(+). It catalyses the reaction L-threonyl-[protein] + ATP = O-phospho-L-threonyl-[protein] + ADP + H(+). Serine/threonine-protein kinase involved in the process of chromatin assembly and probably also DNA replication, transcription, repair, and chromosome segregation. Negative regulator of amino acid starvation-induced autophagy. This is Serine/threonine-protein kinase tousled-like 2 from Xenopus tropicalis (Western clawed frog).